The primary structure comprises 952 residues: Inactive atromentin synthetase invA6 (952 aa).

Positions 58-462 (DSSVQTRSFS…NGRIKDTVIV (405 aa)) are adenylation (A) domain. The 79-residue stretch at 594-672 (APSTETEKTL…SLAKYVDSLV (79 aa)) folds into the Carrier domain. The interval 599–669 (TEKTLGRLYA…VISSLAKYVD (71 aa)) is thiolation and peptide carrier (T) domain. O-(pantetheine 4'-phosphoryl)serine is present on serine 631. The tract at residues 695–939 (PIFMVHPGIG…LMDFDHVSGF (245 aa)) is thioesterase (TE) domain.

It belongs to the ATP-dependent AMP-binding enzyme family.

Its function is as follows. Inactive atromentin synthetase homolog. Does not accept 4-hydroxyphenylpyruvate (4-HPP) as substrate. Both the adenylation (A) and the thioesterase (TE) domain of the invA6 enzyme are inactive. This Paxillus involutus (Naked brimcap) protein is Inactive atromentin synthetase invA6 (invA6).